A 158-amino-acid chain; its full sequence is 6,7-dimethyl-8-ribityllumazine synthase (158 aa).

5-amino-6-(D-ribitylamino)uracil-binding positions include Phe22, 57 to 59, and 81 to 83; these read AYE and AVI. Position 86-87 (86-87) interacts with (2S)-2-hydroxy-3-oxobutyl phosphate; the sequence is GT. The Proton donor role is filled by His89. Phe114 provides a ligand contact to 5-amino-6-(D-ribitylamino)uracil. (2S)-2-hydroxy-3-oxobutyl phosphate is bound at residue Arg128.

This sequence belongs to the DMRL synthase family. Forms an icosahedral capsid composed of 60 subunits, arranged as a dodecamer of pentamers.

The enzyme catalyses (2S)-2-hydroxy-3-oxobutyl phosphate + 5-amino-6-(D-ribitylamino)uracil = 6,7-dimethyl-8-(1-D-ribityl)lumazine + phosphate + 2 H2O + H(+). It functions in the pathway cofactor biosynthesis; riboflavin biosynthesis; riboflavin from 2-hydroxy-3-oxobutyl phosphate and 5-amino-6-(D-ribitylamino)uracil: step 1/2. Catalyzes the formation of 6,7-dimethyl-8-ribityllumazine by condensation of 5-amino-6-(D-ribitylamino)uracil with 3,4-dihydroxy-2-butanone 4-phosphate. This is the penultimate step in the biosynthesis of riboflavin. In Pseudoalteromonas atlantica (strain T6c / ATCC BAA-1087), this protein is 6,7-dimethyl-8-ribityllumazine synthase.